Consider the following 465-residue polypeptide: Cysteine--tRNA ligase (465 aa).

Residue Cys-30 participates in Zn(2+) binding. Positions 32–42 match the 'HIGH' region motif; sequence ITVYDYCHVGH. Zn(2+) is bound by residues Cys-214, His-239, and Glu-243. A 'KMSKS' region motif is present at residues 271 to 275; it reads KMSKS. An ATP-binding site is contributed by Lys-274.

Belongs to the class-I aminoacyl-tRNA synthetase family. Monomer. Zn(2+) serves as cofactor.

The protein resides in the cytoplasm. The enzyme catalyses tRNA(Cys) + L-cysteine + ATP = L-cysteinyl-tRNA(Cys) + AMP + diphosphate. In Burkholderia ambifaria (strain ATCC BAA-244 / DSM 16087 / CCUG 44356 / LMG 19182 / AMMD) (Burkholderia cepacia (strain AMMD)), this protein is Cysteine--tRNA ligase.